The chain runs to 476 residues: Bifunctional protein HldE (476 aa).

The segment at 1–318 (MKPTLPNYDQ…AEAIHGSQDS (318 aa)) is ribokinase. 195-198 (NMLE) lines the ATP pocket. Residue aspartate 264 is part of the active site. Residues 344–476 (MTNGCFDILH…IIEAIKGGRG (133 aa)) form a cytidylyltransferase region.

This sequence in the N-terminal section; belongs to the carbohydrate kinase PfkB family. In the C-terminal section; belongs to the cytidylyltransferase family. As to quaternary structure, homodimer.

The catalysed reaction is D-glycero-beta-D-manno-heptose 7-phosphate + ATP = D-glycero-beta-D-manno-heptose 1,7-bisphosphate + ADP + H(+). The enzyme catalyses D-glycero-beta-D-manno-heptose 1-phosphate + ATP + H(+) = ADP-D-glycero-beta-D-manno-heptose + diphosphate. The protein operates within nucleotide-sugar biosynthesis; ADP-L-glycero-beta-D-manno-heptose biosynthesis; ADP-L-glycero-beta-D-manno-heptose from D-glycero-beta-D-manno-heptose 7-phosphate: step 1/4. Its pathway is nucleotide-sugar biosynthesis; ADP-L-glycero-beta-D-manno-heptose biosynthesis; ADP-L-glycero-beta-D-manno-heptose from D-glycero-beta-D-manno-heptose 7-phosphate: step 3/4. In terms of biological role, catalyzes the phosphorylation of D-glycero-D-manno-heptose 7-phosphate at the C-1 position to selectively form D-glycero-beta-D-manno-heptose-1,7-bisphosphate. Functionally, catalyzes the ADP transfer from ATP to D-glycero-beta-D-manno-heptose 1-phosphate, yielding ADP-D-glycero-beta-D-manno-heptose. The polypeptide is Bifunctional protein HldE (Aliivibrio salmonicida (strain LFI1238) (Vibrio salmonicida (strain LFI1238))).